The sequence spans 125 residues: Type-4 ice-structuring protein (125 aa).

Positions 1 to 20 (MKYTLIAAIVVLALAQGTLA) are cleaved as a signal peptide.

This sequence belongs to the apolipoprotein A1/A4/E family.

The protein localises to the secreted. In terms of biological role, antifreeze proteins lower the blood freezing point. The protein is Type-4 ice-structuring protein of Gadus morhua (Atlantic cod).